A 239-amino-acid chain; its full sequence is Proteasome subunit beta (239 aa).

Polar residues predominate over residues 1–16 (MRQPDSSLPRTGQDHT). A disordered region spans residues 1-32 (MRQPDSSLPRTGQDHTLSPYEPELGEVPSNDL). A propeptide spans 1-44 (MRQPDSSLPRTGQDHTLSPYEPELGEVPSNDLSMADLDNVNKTG) (removed in mature form; by autocatalysis). Thr45 (nucleophile) is an active-site residue.

It belongs to the peptidase T1B family. The 20S proteasome core is composed of 14 alpha and 14 beta subunits that assemble into four stacked heptameric rings, resulting in a barrel-shaped structure. The two inner rings, each composed of seven catalytic beta subunits, are sandwiched by two outer rings, each composed of seven alpha subunits. The catalytic chamber with the active sites is on the inside of the barrel. Has a gated structure, the ends of the cylinder being occluded by the N-termini of the alpha-subunits. Is capped at one or both ends by the proteasome regulatory ATPase, PAN.

The protein localises to the cytoplasm. It catalyses the reaction Cleavage of peptide bonds with very broad specificity.. The formation of the proteasomal ATPase PAN-20S proteasome complex, via the docking of the C-termini of PAN into the intersubunit pockets in the alpha-rings, triggers opening of the gate for substrate entry. Interconversion between the open-gate and close-gate conformations leads to a dynamic regulation of the 20S proteasome proteolysis activity. Its function is as follows. Component of the proteasome core, a large protease complex with broad specificity involved in protein degradation. The chain is Proteasome subunit beta from Natronomonas pharaonis (strain ATCC 35678 / DSM 2160 / CIP 103997 / JCM 8858 / NBRC 14720 / NCIMB 2260 / Gabara) (Halobacterium pharaonis).